The sequence spans 151 residues: Protein SprT-like (151 aa).

The SprT-like domain occupies 6 to 147 (LQRMVENLSE…GHCNGKLRMK (142 aa)). Residue histidine 67 participates in Zn(2+) binding. Residue glutamate 68 is part of the active site. Histidine 71 is a binding site for Zn(2+).

This sequence belongs to the SprT family. Zn(2+) is required as a cofactor.

The protein resides in the cytoplasm. The protein is Protein SprT-like of Staphylococcus aureus (strain MRSA252).